A 119-amino-acid chain; its full sequence is Ribonuclease P protein component (119 aa).

Belongs to the RnpA family. In terms of assembly, consists of a catalytic RNA component (M1 or rnpB) and a protein subunit.

It catalyses the reaction Endonucleolytic cleavage of RNA, removing 5'-extranucleotides from tRNA precursor.. Functionally, RNaseP catalyzes the removal of the 5'-leader sequence from pre-tRNA to produce the mature 5'-terminus. It can also cleave other RNA substrates such as 4.5S RNA. The protein component plays an auxiliary but essential role in vivo by binding to the 5'-leader sequence and broadening the substrate specificity of the ribozyme. The protein is Ribonuclease P protein component of Bifidobacterium longum (strain DJO10A).